Here is a 343-residue protein sequence, read N- to C-terminus: S-adenosylmethionine:tRNA ribosyltransferase-isomerase (343 aa).

It belongs to the QueA family. In terms of assembly, monomer.

It localises to the cytoplasm. It carries out the reaction 7-aminomethyl-7-carbaguanosine(34) in tRNA + S-adenosyl-L-methionine = epoxyqueuosine(34) in tRNA + adenine + L-methionine + 2 H(+). It functions in the pathway tRNA modification; tRNA-queuosine biosynthesis. In terms of biological role, transfers and isomerizes the ribose moiety from AdoMet to the 7-aminomethyl group of 7-deazaguanine (preQ1-tRNA) to give epoxyqueuosine (oQ-tRNA). The chain is S-adenosylmethionine:tRNA ribosyltransferase-isomerase from Pelobacter propionicus (strain DSM 2379 / NBRC 103807 / OttBd1).